The following is a 365-amino-acid chain: Heme A synthase (365 aa).

Helical transmembrane passes span 23–43 (LLRIWLRVVLFTLFCLVLVGG), 109–129 (LLARTIGLVFALPLAFFWLTG), 137–157 (LPLVGLLALGGFQGFVGWWMV), 172–192 (LATHLTIACLIFAGCMWILRG), and 208–228 (GFAALLTVLCLFQIYLGALVA). Residue His272 coordinates heme. 3 helical membrane-spanning segments follow: residues 274 to 294 (LGAYTLFAATLWHMVSMARAL), 303 to 323 (AVLFFVLISVQAGLGITTLLM), and 327 to 347 (IHVALAHQGMALILLGFSVAH). His333 is a binding site for heme.

This sequence belongs to the COX15/CtaA family. Type 2 subfamily. Interacts with CtaB. Heme b serves as cofactor.

The protein localises to the cell membrane. The enzyme catalyses Fe(II)-heme o + 2 A + H2O = Fe(II)-heme a + 2 AH2. It participates in porphyrin-containing compound metabolism; heme A biosynthesis; heme A from heme O: step 1/1. Functionally, catalyzes the conversion of heme O to heme A by two successive hydroxylations of the methyl group at C8. The first hydroxylation forms heme I, the second hydroxylation results in an unstable dihydroxymethyl group, which spontaneously dehydrates, resulting in the formyl group of heme A. The protein is Heme A synthase of Agrobacterium fabrum (strain C58 / ATCC 33970) (Agrobacterium tumefaciens (strain C58)).